The sequence spans 237 residues: Ribosomal RNA large subunit methyltransferase E (237 aa).

Glycine 76, tryptophan 78, aspartate 99, aspartate 115, and aspartate 139 together coordinate S-adenosyl-L-methionine. The Proton acceptor role is filled by lysine 179.

This sequence belongs to the class I-like SAM-binding methyltransferase superfamily. RNA methyltransferase RlmE family.

It localises to the cytoplasm. It catalyses the reaction uridine(2552) in 23S rRNA + S-adenosyl-L-methionine = 2'-O-methyluridine(2552) in 23S rRNA + S-adenosyl-L-homocysteine + H(+). Its function is as follows. Specifically methylates the uridine in position 2552 of 23S rRNA at the 2'-O position of the ribose in the fully assembled 50S ribosomal subunit. This Rhodopseudomonas palustris (strain ATCC BAA-98 / CGA009) protein is Ribosomal RNA large subunit methyltransferase E.